The following is a 246-amino-acid chain: tRNA (guanine-N(1)-)-methyltransferase (246 aa).

S-adenosyl-L-methionine-binding positions include glycine 113 and 133 to 138 (IGDYVL).

This sequence belongs to the RNA methyltransferase TrmD family. Homodimer.

The protein localises to the cytoplasm. The catalysed reaction is guanosine(37) in tRNA + S-adenosyl-L-methionine = N(1)-methylguanosine(37) in tRNA + S-adenosyl-L-homocysteine + H(+). Its function is as follows. Specifically methylates guanosine-37 in various tRNAs. This chain is tRNA (guanine-N(1)-)-methyltransferase, found in Yersinia pseudotuberculosis serotype O:1b (strain IP 31758).